The sequence spans 622 residues: Chaperone protein HscA homolog (622 aa).

The protein belongs to the heat shock protein 70 family.

Functionally, chaperone involved in the maturation of iron-sulfur cluster-containing proteins. Has a low intrinsic ATPase activity which is markedly stimulated by HscB. The chain is Chaperone protein HscA homolog from Burkholderia pseudomallei (strain K96243).